A 232-amino-acid chain; its full sequence is uncharacterized protein (232 aa).

The chain crosses the membrane as a helical span at residues 209-229 (ATISTPALGYAYFLFTLTLVF).

It is found in the host membrane. This is an uncharacterized protein from Saccharolobus islandicus (Sulfolobus islandicus).